The following is a 377-amino-acid chain: Serine/threonine-protein phosphatase PP2A-2 catalytic subunit (377 aa).

A disordered region spans residues 1–66; the sequence is MDMEIDDPMH…SGIADHKSSK (66 aa). Residues 28 to 40 are compositionally biased toward basic and acidic residues; the sequence is DDGKNNTKARSND. S38 bears the Phosphoserine mark. T43 bears the Phosphothreonine mark. D125, H127, D153, and N185 together coordinate Mn(2+). H186 acts as the Proton donor in catalysis. 2 residues coordinate Mn(2+): H235 and H309. The residue at position 377 (L377) is a Leucine methyl ester.

This sequence belongs to the PPP phosphatase family. PP-2A subfamily. As to quaternary structure, inactivated in a complex with phosphatase methylesterase PPE1 (PP2Ai). Interacts with phosphatase 2A activator RRD2, which can reactivate PP2Ai by dissociating the catalytic subunit from the complex. Interacts with TAP42. Mn(2+) serves as cofactor. Reversibly methyl esterified on Leu-377 by leucine carboxyl methyltransferase 1 (PPM1) and protein phosphatase methylesterase 1 (PPE1). Carboxyl methylation influences the affinity of the catalytic subunit for the different regulatory subunits, thereby modulating the PP2A holoenzyme's substrate specificity, enzyme activity and cellular localization.

It carries out the reaction O-phospho-L-seryl-[protein] + H2O = L-seryl-[protein] + phosphate. The enzyme catalyses O-phospho-L-threonyl-[protein] + H2O = L-threonyl-[protein] + phosphate. In terms of biological role, exact function not known, phosphatase 2A performs an essential cellular function. The protein is Serine/threonine-protein phosphatase PP2A-2 catalytic subunit (PPH22) of Saccharomyces cerevisiae (strain ATCC 204508 / S288c) (Baker's yeast).